Here is a 520-residue protein sequence, read N- to C-terminus: GMP synthase [glutamine-hydrolyzing] (520 aa).

The 194-residue stretch at 9-202 folds into the Glutamine amidotransferase type-1 domain; it reads TVLIVDFGSQ…VHKIAGIKGD (194 aa). The Nucleophile role is filled by cysteine 86. Active-site residues include histidine 176 and glutamate 178. The 193-residue stretch at 203–395 folds into the GMPS ATP-PPase domain; sequence WTMSAYRAKA…LGLPESFIGR (193 aa). Position 230–236 (230–236) interacts with ATP; the sequence is SGGVDSS.

As to quaternary structure, homodimer.

It catalyses the reaction XMP + L-glutamine + ATP + H2O = GMP + L-glutamate + AMP + diphosphate + 2 H(+). It functions in the pathway purine metabolism; GMP biosynthesis; GMP from XMP (L-Gln route): step 1/1. Functionally, catalyzes the synthesis of GMP from XMP. This is GMP synthase [glutamine-hydrolyzing] from Sinorhizobium fredii (strain NBRC 101917 / NGR234).